Consider the following 101-residue polypeptide: Small ribosomal subunit protein uS14A (101 aa).

The interval 29–73 (AIISSPSTPADARAAAQSELNRQPRDASPVRVRNRDAVDGRPRGH) is disordered. A compositionally biased stretch (basic and acidic residues) spans 61–70 (RNRDAVDGRP).

It belongs to the universal ribosomal protein uS14 family. Part of the 30S ribosomal subunit. Contacts proteins S3 and S10.

In terms of biological role, binds 16S rRNA, required for the assembly of 30S particles and may also be responsible for determining the conformation of the 16S rRNA at the A site. The protein is Small ribosomal subunit protein uS14A of Mycolicibacterium gilvum (strain PYR-GCK) (Mycobacterium gilvum (strain PYR-GCK)).